Reading from the N-terminus, the 409-residue chain is Argininosuccinate synthase (409 aa).

ATP-binding positions include 10–18 (AYSGGLDTS) and alanine 37. Positions 90 and 95 each coordinate L-citrulline. Position 120 (glycine 120) interacts with ATP. Residues threonine 122, asparagine 126, and aspartate 127 each coordinate L-aspartate. An L-citrulline-binding site is contributed by asparagine 126. L-citrulline contacts are provided by arginine 130, serine 182, serine 191, glutamate 267, and tyrosine 279.

It belongs to the argininosuccinate synthase family. Type 1 subfamily. Homotetramer.

The protein resides in the cytoplasm. The catalysed reaction is L-citrulline + L-aspartate + ATP = 2-(N(omega)-L-arginino)succinate + AMP + diphosphate + H(+). Its pathway is amino-acid biosynthesis; L-arginine biosynthesis; L-arginine from L-ornithine and carbamoyl phosphate: step 2/3. The chain is Argininosuccinate synthase from Aromatoleum aromaticum (strain DSM 19018 / LMG 30748 / EbN1) (Azoarcus sp. (strain EbN1)).